We begin with the raw amino-acid sequence, 741 residues long: Eukaryotic translation initiation factor 3 subunit B (741 aa).

Residues 1 to 10 show a composition bias toward polar residues; the sequence is MAPSFDTLSE. The interval 1-21 is disordered; the sequence is MAPSFDTLSEQDLHEEEEEEI. The region spanning 40–126 is the RRM domain; that stretch reads TFIVIDGLPI…HTLAVNKLMD (87 aa). 5 WD repeats span residues 193 to 230, 232 to 289, 303 to 344, 514 to 557, and 572 to 610; these read AHWTQLFVQWSPKGTYLASVHPQGVQLWGGPAFSKQKQ, PHPF…RSFV, APKK…LLGK, IEKK…EKAE, and VEHYGVTDIDWDPTGRYVVSSASVWTHSMENGWNIHTFA. A disordered region spans residues 696–723; sequence DAYGIPEDADDAKVAKDAPPVSEDQGEA.

Belongs to the eIF-3 subunit B family. In terms of assembly, component of the eukaryotic translation initiation factor 3 (eIF-3) complex.

The protein localises to the cytoplasm. Functionally, RNA-binding component of the eukaryotic translation initiation factor 3 (eIF-3) complex, which is involved in protein synthesis of a specialized repertoire of mRNAs and, together with other initiation factors, stimulates binding of mRNA and methionyl-tRNAi to the 40S ribosome. The eIF-3 complex specifically targets and initiates translation of a subset of mRNAs involved in cell proliferation. This is Eukaryotic translation initiation factor 3 subunit B (prt1) from Aspergillus oryzae (strain ATCC 42149 / RIB 40) (Yellow koji mold).